Here is a 398-residue protein sequence, read N- to C-terminus: Lysophosphatidylserine lipase ABHD12 (398 aa).

Residues 1–15 show a composition bias toward basic and acidic residues; the sequence is MRKRTEPVTLEHERC. The interval 1–24 is disordered; it reads MRKRTEPVTLEHERCAASGSSSSG. Over 1–74 the chain is Cytoplasmic; sequence MRKRTEPVTL…RKSLWFRLRK (74 aa). Residues 75-95 form a helical membrane-spanning segment; sequence ILLCVLGFYIAIPFLVKLCPG. The Extracellular portion of the chain corresponds to 96 to 398; that stretch reads IQAKLIFLNF…LGKSEPERQH (303 aa). Asn123 carries an N-linked (GlcNAc...) asparagine glycan. Residue Ser246 is the Nucleophile of the active site. Residues Asp333 and His372 each act as charge relay system in the active site.

It belongs to the serine esterase family.

The protein resides in the endoplasmic reticulum membrane. The enzyme catalyses 1-(9Z-octadecenoyl)-sn-glycero-3-phospho-L-serine + H2O = sn-glycero-3-phospho-L-serine + (9Z)-octadecenoate + H(+). It catalyses the reaction 1-(9Z-octadecenoyl)-sn-glycero-3-phospho-(1'-sn-glycerol) + H2O = sn-glycero-3-phospho-(1'-sn-glycerol) + (9Z)-octadecenoate + H(+). The catalysed reaction is 1-(9Z-octadecenoyl)-sn-glycero-3-phospho-(1D-myo-inositol) + H2O = sn-glycero-3-phospho-1D-myo-inositol + (9Z)-octadecenoate + H(+). It carries out the reaction 1-(9Z-octadecenoyl)-sn-glycero-3-phosphoethanolamine + H2O = sn-glycero-3-phosphoethanolamine + (9Z)-octadecenoate + H(+). The enzyme catalyses 1-(9Z-octadecenoyl)-sn-glycero-3-phosphocholine + H2O = 1-(9Z-octadecenoyl)-sn-glycerol + phosphocholine + H(+). It catalyses the reaction 2-(9Z-octadecenoyl)-glycerol + H2O = glycerol + (9Z)-octadecenoate + H(+). The catalysed reaction is 1-hexadecanoyl-sn-glycero-3-phospho-L-serine + H2O = sn-glycero-3-phospho-L-serine + hexadecanoate + H(+). It carries out the reaction 2-(5Z,8Z,11Z,14Z-eicosatetraenoyl)-glycerol + H2O = glycerol + (5Z,8Z,11Z,14Z)-eicosatetraenoate + H(+). The enzyme catalyses Hydrolyzes glycerol monoesters of long-chain fatty acids.. It catalyses the reaction 1-decanoylglycerol + H2O = decanoate + glycerol + H(+). The catalysed reaction is 1-dodecanoylglycerol + H2O = dodecanoate + glycerol + H(+). It carries out the reaction 1-tetradecanoylglycerol + H2O = tetradecanoate + glycerol + H(+). The enzyme catalyses 2-hexadecanoylglycerol + H2O = glycerol + hexadecanoate + H(+). It catalyses the reaction 1-(9Z-octadecenoyl)-glycerol + H2O = glycerol + (9Z)-octadecenoate + H(+). The catalysed reaction is 2-(9Z,12Z-octadecadienoyl)-glycerol + H2O = (9Z,12Z)-octadecadienoate + glycerol + H(+). It carries out the reaction 1-(5Z,8Z,11Z,14Z-eicosatetraenoyl)-glycerol + H2O = glycerol + (5Z,8Z,11Z,14Z)-eicosatetraenoate + H(+). The enzyme catalyses 1-(9Z,12Z-octadecadienoyl)-glycerol + H2O = (9Z,12Z)-octadecadienoate + glycerol + H(+). It catalyses the reaction 1-hexadecanoylglycerol + H2O = glycerol + hexadecanoate + H(+). The catalysed reaction is 1-octadecanoylglycerol + H2O = octadecanoate + glycerol + H(+). It carries out the reaction 1-octadecanoyl-2-(9,10-epoxyoctadecanoyl)-sn-glycero-3-phospho-L-serine + H2O = 9,10-epoxyoctadecanoate + 1-octadecanoyl-sn-glycero-3-phosphoserine + H(+). The enzyme catalyses 1-octadecanoyl-2-(10-hydroxyoctadecanoyl)-sn-glycero-3-phospho-L-serine + H2O = 1-octadecanoyl-sn-glycero-3-phosphoserine + 10-hydroxyoctadecanoate + H(+). It catalyses the reaction 1-hexadecanoyl-2-(10-hydroxyoctadecanoyl)-sn-glycero-3-phospho-L-serine + H2O = 10-hydroxyoctadecanoate + 1-hexadecanoyl-sn-glycero-3-phospho-L-serine + H(+). Its function is as follows. Lysophosphatidylserine (LPS) lipase that mediates the hydrolysis of lysophosphatidylserine, a class of signaling lipids that regulates immunological and neurological processes. Represents a major lysophosphatidylserine lipase in the brain, thereby playing a key role in the central nervous system. Also able to hydrolyze oxidized phosphatidylserine; oxidized phosphatidylserine is produced in response to severe inflammatory stress and constitutes a proapoptotic 'eat me' signal. Also has monoacylglycerol (MAG) lipase activity: hydrolyzes 2-arachidonoylglycerol (2-AG), thereby acting as a regulator of endocannabinoid signaling pathways. Has a strong preference for very-long-chain lipid substrates; substrate specificity is likely due to improved catalysis and not improved substrate binding. The protein is Lysophosphatidylserine lipase ABHD12 of Rattus norvegicus (Rat).